Here is a 646-residue protein sequence, read N- to C-terminus: MMLRRNAVRSLKTMEISVSNVVNSGSIAMLRGKLANVVLSDRTYHSSPIFHKNVPKGVLDKKNGREQRKTEQNVFNVDPASPWRHELLSFDECVSSALKYSTTPLQNTYKRIGNNQLNKNPSFAMFWDSMGRAMELYYSLRESPDFNAYRVSRLIHLLHNGLRSTRDQLVKLSRKPDYDSQSFHKEMMNFLCNSLKDISDDILIGKVSVSGYGATHLLTSFKELSFDDDCIRIWEASKNLSDETTSQAFQEPKVVGFMLPLLYAKTRSLTEPNELYNQIIQSKEFIHPNLYSGLIKVFIKAEDYEKALSLFGQLCEKAEVRNYGYLIETHLSFIGDSKNLTLAESFFDKIINDEMPYKIILQVSTVNSFLQNIWKAQNDFDHVYRIWEKAVKFYGNTVNPGILSSLNNTFFTIFFENYINDNINGFRKLQEIITFYSGVKKIDEPFFNVMLTRASIWHERSIIDFIDKNYTLYHIPRTIISYRILLKSLGSIDNTNNEEILDRWLELVKKLNELGQQYIANADLSALRDATVVWSQSKRDEKVFSAKAKGTPATTTTTEDDIKVPKPLENLKNEDSTSNSEDRIELYLKILKRYTPYFRATKQVYRYTTGCAESYPILNEYLSGYSDLSAEDIPVPQLHSFIAKEQ.

A mitochondrion-targeting transit peptide spans 1-14 (MMLRRNAVRSLKTM). Residues 15–51 (EISVSNVVNSGSIAMLRGKLANVVLSDRTYHSSPIFH) constitute a propeptide, removed in mature form. A PPR1 repeat occupies 209–238 (VSGYGATHLLTSFKELSFDDDCIRIWEASK). Residues 251–282 (EPKVVGFMLPLLYAKTRSLTEPNELYNQIIQS) form a PPR2 repeat. The stretch at 288 to 317 (PNLYSGLIKVFIKAEDYEKALSLFGQLCEK) is one PPR3 repeat. The PPR4 repeat unit spans residues 323-353 (YGYLIETHLSFIGDSKNLTLAESFFDKIIND). The PPR5 repeat unit spans residues 363–394 (VSTVNSFLQNIWKAQNDFDHVYRIWEKAVKFY). One copy of the PPR6 repeat lies at 401 to 439 (GILSSLNNTFFTIFFENYINDNINGFRKLQEIITFYSGV). The stretch at 444 to 473 (EPFFNVMLTRASIWHERSIIDFIDKNYTLY) is one PPR7 repeat. Residues 481–514 (SYRILLKSLGSIDNTNNEEILDRWLELVKKLNEL) form a PPR8 repeat.

Belongs to the RMD9 family. In terms of assembly, monomer. Phosphorylated. Phosphorylation promotes binding to RNA.

The protein resides in the mitochondrion inner membrane. In terms of biological role, binds the RNA motif 5'-AAUAA[U/C]AUUCUU-3' in the 3'-UTR of mitochondrial mRNAs. Involved in the processing or stability of mitochondrial mRNAs. The sequence is that of RNA-binding protein RMD9, mitochondrial from Saccharomyces cerevisiae (strain ATCC 204508 / S288c) (Baker's yeast).